We begin with the raw amino-acid sequence, 85 residues long: Alpha-insect toxin BjaIT (85 aa).

An N-terminal signal peptide occupies residues 1 to 19 (MNYLVVICFALLLMTGVES). The LCN-type CS-alpha/beta domain maps to 21–83 (RDAYIADNLN…VPIRIPGACR (63 aa)). 4 disulfides stabilise this stretch: C31-C82, C35-C55, C41-C65, and C45-C67. R83 is subject to Arginine amide.

Belongs to the long (4 C-C) scorpion toxin superfamily. Sodium channel inhibitor family. Alpha subfamily. In terms of tissue distribution, expressed by the venom gland.

It localises to the secreted. Alpha toxins bind voltage-independently at site-3 of sodium channels (Nav) and inhibit the inactivation of the activated channels, thereby blocking neuronal transmission. This toxin is active against insects (para/tipE). The protein is Alpha-insect toxin BjaIT of Hottentotta judaicus (Black scorpion).